The sequence spans 210 residues: Chaperone protein TorD (210 aa).

The protein belongs to the TorD/DmsD family. TorD subfamily.

It is found in the cytoplasm. In terms of biological role, involved in the biogenesis of TorA. Acts on TorA before the insertion of the molybdenum cofactor and, as a result, probably favors a conformation of the apoenzyme that is competent for acquiring the cofactor. The sequence is that of Chaperone protein TorD from Salmonella schwarzengrund (strain CVM19633).